An 88-amino-acid polypeptide reads, in one-letter code: Chaplin-F (88 aa).

The signal sequence occupies residues 1–36; it reads MYNPKEHFSMSRIAKGLALTSVAAAAVAGTAGVAAA. One can recognise a Chaplin domain in the interval 47 to 87; that stretch reads SPGVLSGNVVQVPVHIPVNVCGNTIDVIGLLNPAFGNECEN. A disulfide bridge connects residues Cys67 and Cys85.

The protein belongs to the chaplin family. Short chaplin subfamily. Homodimer; disulfide linked. About 20% of ChpF isolated from cell wall forms disulfide-bonded homodimers.

The protein localises to the cell surface. The protein resides in the secreted. It localises to the cell wall. It is found in the fimbrium. One of 8 partially redundant surface-active proteins required for efficient formation of aerial mycelium; the short chaplins assemble into a hydrophobic, amyloidal fibrillar surface layer that envelopes and protects aerial hyphae and spores, presumably anchored to the long chaplins. Chaplins have an overlapping function with the surface-active SapB peptide; chaplins are essential on minimal medium while on rich medium both chaplins and SapB are required for efficient aerial hyphae formation. Chaplins are also involved in cell attachment to a hydrophobic surface. Forms amyloid fibrils in vitro probably composed of stacked beta-sheets, at low extracellular concentrations individually restores the ability to form aerial hyphae to a chaplin-deficient strain. A small chaplin extract (ChpD, ChpE, ChpF, ChpG and ChpH) self-assembles into 2 different amyloids; small fibrils at the air-water interface form an amphipathic membrane that resembles spore-surface structures involved in aerial hyphae formation, and hydrophilic fibrils in solution that resemble the fibers that attach cells to a hydrophobic surface. At the air-water interface the hydrophilic surface is in contact with water (probably equivalent to the peptidoglycan layer), while the hydrophobic face is exposed to the air, making the surface of the aerial hyphae hydrophobic. A small chaplin extract applied to a chaplin-deficient strain restores aerial hyphae formation. The small chaplin extract forms an amyloid-like structure similar to that seen on the surface of cells without rodlets (rdlA-rdlB deletions), and is highly surface active, reducing surface tension from 72 to 26 mJ/m(2), which probably allows escape of hyphae from an aqueous environment into air. ChpF alone is less surface active at pH 3.0 than at pH 10.0, it reduces the surface tension of water from 72.8 mN/m to 50 mN/m at pH 3.0 or to 37 mN/m at pH 10.0. ChpF and ChpG are sufficient to restore the rodlet layer and hydrophobicity to a strain deleted for the other 6 chaplin genes. The chain is Chaplin-F from Streptomyces coelicolor (strain ATCC BAA-471 / A3(2) / M145).